The sequence spans 358 residues: Methionine aminopeptidase 2 (358 aa).

Residue histidine 109 coordinates substrate. Residues aspartate 130, aspartate 141, and histidine 210 each coordinate a divalent metal cation. Histidine 218 provides a ligand contact to substrate. Positions 243 and 339 each coordinate a divalent metal cation.

Belongs to the peptidase M24A family. Methionine aminopeptidase eukaryotic type 2 subfamily. The cofactor is Co(2+). Zn(2+) is required as a cofactor. Requires Mn(2+) as cofactor. It depends on Fe(2+) as a cofactor.

The protein localises to the cytoplasm. The enzyme catalyses Release of N-terminal amino acids, preferentially methionine, from peptides and arylamides.. Functionally, cotranslationally removes the N-terminal methionine from nascent proteins. The N-terminal methionine is often cleaved when the second residue in the primary sequence is small and uncharged (Met-Ala-, Cys, Gly, Pro, Ser, Thr, or Val). This is Methionine aminopeptidase 2 from Encephalitozoon intestinalis (strain ATCC 50506) (Microsporidian parasite).